The sequence spans 282 residues: Small ribosomal subunit protein uS2 (282 aa).

The disordered stretch occupies residues 260–282 (KRRRSKVYKEEEREVVTNEDESR). Basic and acidic residues predominate over residues 266–282 (VYKEEEREVVTNEDESR).

The protein belongs to the universal ribosomal protein uS2 family.

The chain is Small ribosomal subunit protein uS2 from Wolbachia pipientis wMel.